The following is a 327-amino-acid chain: Methionyl-tRNA formyltransferase (327 aa).

121–124 (SLLP) contributes to the (6S)-5,6,7,8-tetrahydrofolate binding site.

Belongs to the Fmt family.

It catalyses the reaction L-methionyl-tRNA(fMet) + (6R)-10-formyltetrahydrofolate = N-formyl-L-methionyl-tRNA(fMet) + (6S)-5,6,7,8-tetrahydrofolate + H(+). Its function is as follows. Attaches a formyl group to the free amino group of methionyl-tRNA(fMet). The formyl group appears to play a dual role in the initiator identity of N-formylmethionyl-tRNA by promoting its recognition by IF2 and preventing the misappropriation of this tRNA by the elongation apparatus. The protein is Methionyl-tRNA formyltransferase of Burkholderia multivorans (strain ATCC 17616 / 249).